Reading from the N-terminus, the 510-residue chain is Propionyl-CoA carboxylase beta chain (510 aa).

The 257-residue stretch at 1–257 folds into the CoA carboxyltransferase N-terminal domain; it reads MKDILEQLED…NNREKPPVRP (257 aa). Positions 1–504 are carboxyltransferase; it reads MKDILEQLED…NKSVQMPWKK (504 aa). The CoA carboxyltransferase C-terminal domain occupies 261–504; sequence DPDRIEPSLD…NKSVQMPWKK (244 aa). Residues 292–325 form an acyl-CoA binding region; the sequence is DEGDFYEIQEEFAKNIITGFIRLEGRTVGVVANQ.

Belongs to the AccD/PCCB family. The holoenzyme is a dodecamer composed of 6 PccA/alpha subunits and 6 PccB/beta subunits.

It catalyses the reaction propanoyl-CoA + hydrogencarbonate + ATP = (S)-methylmalonyl-CoA + ADP + phosphate + H(+). It participates in metabolic intermediate metabolism; propanoyl-CoA degradation; succinyl-CoA from propanoyl-CoA: step 1/3. In terms of biological role, this is one of the 2 subunits of the biotin-dependent propionyl-CoA carboxylase (PCC), the enzyme catalyzing the carboxylation of propionyl-CoA/propanoyl-CoA to D-methylmalonyl-CoA/(S)-methylmalonyl-CoA. Within the holoenzyme, the alpha subunit catalyzes the ATP-dependent carboxylation of the biotin carried by the biotin carboxyl carrier (BCC) domain, while the beta subunit then tranfers the carboxyl group from carboxylated biotin to propionyl-CoA. The polypeptide is Propionyl-CoA carboxylase beta chain (Roseobacter denitrificans (strain ATCC 33942 / OCh 114) (Erythrobacter sp. (strain OCh 114))).